The primary structure comprises 401 residues: Exodeoxyribonuclease 7 large subunit (401 aa).

Belongs to the XseA family. Heterooligomer composed of large and small subunits.

The protein resides in the cytoplasm. It carries out the reaction Exonucleolytic cleavage in either 5'- to 3'- or 3'- to 5'-direction to yield nucleoside 5'-phosphates.. Functionally, bidirectionally degrades single-stranded DNA into large acid-insoluble oligonucleotides, which are then degraded further into small acid-soluble oligonucleotides. In Clostridium botulinum (strain Loch Maree / Type A3), this protein is Exodeoxyribonuclease 7 large subunit.